Reading from the N-terminus, the 954-residue chain is MTQKFEMADRFNPSAVEQALYQHWEESGYFKPSENENAPSYCIAIPPPNVTGSLHMGHAFQQTLMDTLIRFNRMEGHNTLWQAGTDHAGIATQMVVERKIAAEEGKTRHDYGREAFINKIWDWKAYSGGTISQQMRRLGNSIDWERERFTMDDGLSNAVKEVFVRLHEEGLIYRGKRLVNWDPKLHTAISDLEVENKESKGSLWHFRYPLANGAKTADGKDYLVVATTRPETMLGDTAVAVHPEDERYQSLIGKTVVLPLANREIPIIADEYVDREFGTGVVKITPAHDFNDYEVGKRHNLPMVNVLTLNANIRDEAEIIGTDGKPLAGYEATIPADYRGLERFAARKKIVADFEALGLLDEIKPHDLKVPYGDRGGVPIEPMLTDQWYVSVKPLADVAIKAVEDGEIQFVPKQYENLYFSWMRDIQDWCISRQLWWGHRIPAWYDAEGNVYVARNEEEVRSKYNLDSAVELKQDEDVLDTWFSSGLWTFSTLGWPEQTKELKMFHPTDVLITGFDIIFFWVARMIMFTMHFVKDENGKPQVPFKTVYVTGLIRDEQGQKMSKSKGNVLDPIDMIDGISLEDLLEKRTGNMMQPQLAEKIAKATRKEFADGIAAHGTDALRFTLAALASNGRDINWDMKRLEGYRNFCNKLWNASRFVLTNEKLDLSEGEIEFSLADRWIQSEFNRTVETFRNSLSQYRFDLCANAIYEFTWNQFCDWYLELTKPVFANGNAAQIRAASQTLVHVLEKLLRLAHPLIPFITEEIWQKVKGFVGITADSIMLQPFPQVEENGFDLEAEAEIEWLKEVIVAVRNIRAESNIAPSKGLDLLFRNLSAENAKILEKQTALLKAMAKLDNVQVLAANEAAPLAVAKLVGNAELLVPMAGFINKEAELARLTKEIEKYQNEVKRIENKLSNESFVAKAPEAVIAKEREKQAEYQSGLEKIQEQYKAIEAL.

The short motif at 48–58 is the 'HIGH' region element; the sequence is PNVTGSLHMGH. The 'KMSKS' region motif lies at 560–564; it reads KMSKS. Residue Lys563 coordinates ATP. Positions 883–953 form a coiled coil; that stretch reads AGFINKEAEL…IQEQYKAIEA (71 aa).

This sequence belongs to the class-I aminoacyl-tRNA synthetase family. ValS type 1 subfamily. In terms of assembly, monomer.

It is found in the cytoplasm. The enzyme catalyses tRNA(Val) + L-valine + ATP = L-valyl-tRNA(Val) + AMP + diphosphate. Functionally, catalyzes the attachment of valine to tRNA(Val). As ValRS can inadvertently accommodate and process structurally similar amino acids such as threonine, to avoid such errors, it has a 'posttransfer' editing activity that hydrolyzes mischarged Thr-tRNA(Val) in a tRNA-dependent manner. In Haemophilus influenzae (strain 86-028NP), this protein is Valine--tRNA ligase.